Consider the following 351-residue polypeptide: Cytosolic sulfotransferase 9 (351 aa).

Basic and acidic residues predominate over residues 1 to 11 (MDEKDILRNLR). The disordered stretch occupies residues 1–24 (MDEKDILRNLREEEEEEEENQSEE). Over residues 12-22 (EEEEEEEENQS) the composition is skewed to acidic residues. 80–85 (KSGTTW) provides a ligand contact to 3'-phosphoadenylyl sulfate. H152 (proton acceptor) is an active-site residue. 3'-phosphoadenylyl sulfate-binding positions include R174, S182, Y252, and 317–319 (RKG).

It belongs to the sulfotransferase 1 family. Expressed in roots and leaves.

It is found in the cytoplasm. Functionally, sulfotransferase that utilizes 3'-phospho-5'-adenylyl sulfate (PAPS) as sulfonate donor. No activity with brassinosteroids. The protein is Cytosolic sulfotransferase 9 (STO9) of Arabidopsis thaliana (Mouse-ear cress).